Reading from the N-terminus, the 224-residue chain is UPF0173 metal-dependent hydrolase STH3160 (224 aa).

Belongs to the UPF0173 family.

The polypeptide is UPF0173 metal-dependent hydrolase STH3160 (Symbiobacterium thermophilum (strain DSM 24528 / JCM 14929 / IAM 14863 / T)).